The sequence spans 171 residues: AP-3 complex subunit sigma (171 aa).

Belongs to the adaptor complexes small subunit family. As to quaternary structure, adaptor protein complex 3 (AP-3) is a heterotetramer composed of two large adaptins (delta-type subunit and beta-type subunit), a medium adaptin (mu-type subunit) and a small adaptin (sigma-type subunit).

It localises to the endosome membrane. Its function is as follows. Part of the AP-3 complex, an adaptor-related complex which is essential for the compartmentalization of the endocytic pathway. This is AP-3 complex subunit sigma (ap3s1) from Dictyostelium discoideum (Social amoeba).